Reading from the N-terminus, the 201-residue chain is Pyridoxine/pyridoxamine 5'-phosphate oxidase (201 aa).

Residues 49–54, 64–65, lysine 71, and glutamine 93 each bind FMN; these read RMVLLK and YT. Residue lysine 54 participates in substrate binding. 3 residues coordinate substrate: tyrosine 111, arginine 115, and serine 119. FMN is bound by residues 128–129 and tryptophan 172; that span reads QS. Residue 178–180 participates in substrate binding; the sequence is RLH. Arginine 182 contributes to the FMN binding site.

It belongs to the pyridoxamine 5'-phosphate oxidase family. Homodimer. FMN is required as a cofactor.

It carries out the reaction pyridoxamine 5'-phosphate + O2 + H2O = pyridoxal 5'-phosphate + H2O2 + NH4(+). It catalyses the reaction pyridoxine 5'-phosphate + O2 = pyridoxal 5'-phosphate + H2O2. Its pathway is cofactor metabolism; pyridoxal 5'-phosphate salvage; pyridoxal 5'-phosphate from pyridoxamine 5'-phosphate: step 1/1. It participates in cofactor metabolism; pyridoxal 5'-phosphate salvage; pyridoxal 5'-phosphate from pyridoxine 5'-phosphate: step 1/1. Catalyzes the oxidation of either pyridoxine 5'-phosphate (PNP) or pyridoxamine 5'-phosphate (PMP) into pyridoxal 5'-phosphate (PLP). The chain is Pyridoxine/pyridoxamine 5'-phosphate oxidase from Ruegeria sp. (strain TM1040) (Silicibacter sp.).